We begin with the raw amino-acid sequence, 206 residues long: Small ribosomal subunit protein uS3 (206 aa).

In terms of domain architecture, KH type-2 spans 39-107 (IRSYINESFK…SVEVNVVGVK (69 aa)).

This sequence belongs to the universal ribosomal protein uS3 family. Part of the 30S ribosomal subunit. Forms a tight complex with proteins S10 and S14.

Its function is as follows. Binds the lower part of the 30S subunit head. Binds mRNA in the 70S ribosome, positioning it for translation. This chain is Small ribosomal subunit protein uS3, found in Wolbachia pipientis subsp. Culex pipiens (strain wPip).